The following is a 129-amino-acid chain: Small ribosomal subunit protein uS8 (129 aa).

It belongs to the universal ribosomal protein uS8 family. In terms of assembly, part of the 30S ribosomal subunit. Contacts proteins S5 and S12.

Its function is as follows. One of the primary rRNA binding proteins, it binds directly to 16S rRNA central domain where it helps coordinate assembly of the platform of the 30S subunit. This is Small ribosomal subunit protein uS8 from Mycoplasma capricolum subsp. capricolum (strain California kid / ATCC 27343 / NCTC 10154).